Reading from the N-terminus, the 480-residue chain is Glutamate--tRNA ligase (480 aa).

The short motif at 12–22 is the 'HIGH' region element; that stretch reads PSPTGAPHLGL. Positions 255–259 match the 'KMSKS' region motif; sequence KLSKR. Lysine 258 serves as a coordination point for ATP.

The protein belongs to the class-I aminoacyl-tRNA synthetase family. Glutamate--tRNA ligase type 1 subfamily. In terms of assembly, monomer.

Its subcellular location is the cytoplasm. The catalysed reaction is tRNA(Glu) + L-glutamate + ATP = L-glutamyl-tRNA(Glu) + AMP + diphosphate. Functionally, catalyzes the attachment of glutamate to tRNA(Glu) in a two-step reaction: glutamate is first activated by ATP to form Glu-AMP and then transferred to the acceptor end of tRNA(Glu). This chain is Glutamate--tRNA ligase, found in Tropheryma whipplei (strain TW08/27) (Whipple's bacillus).